Consider the following 320-residue polypeptide: Porphobilinogen deaminase (320 aa).

Cys251 bears the S-(dipyrrolylmethanemethyl)cysteine mark.

The protein belongs to the HMBS family. As to quaternary structure, monomer. Dipyrromethane is required as a cofactor.

The enzyme catalyses 4 porphobilinogen + H2O = hydroxymethylbilane + 4 NH4(+). It functions in the pathway porphyrin-containing compound metabolism; protoporphyrin-IX biosynthesis; coproporphyrinogen-III from 5-aminolevulinate: step 2/4. In terms of biological role, tetrapolymerization of the monopyrrole PBG into the hydroxymethylbilane pre-uroporphyrinogen in several discrete steps. The protein is Porphobilinogen deaminase of Phenylobacterium zucineum (strain HLK1).